The sequence spans 881 residues: Envelope glycoprotein gp160 (881 aa).

The signal sequence occupies residues 1–22; that stretch reads MGCLKNQLLIAILLLSVYGIYC. Residues 23 to 696 are Extracellular-facing; sequence TQYVTVFYGV…ASWIKYIQYG (674 aa). Asparagine 37 is a glycosylation site (N-linked (GlcNAc...) asparagine; by host). Cysteine 44 and cysteine 57 form a disulfide bridge. N-linked (GlcNAc...) asparagine; by host glycans are attached at residues asparagine 70, asparagine 114, asparagine 148, asparagine 158, asparagine 173, asparagine 186, asparagine 200, asparagine 204, asparagine 214, asparagine 246, asparagine 249, asparagine 280, asparagine 286, asparagine 297, asparagine 308, asparagine 318, asparagine 373, and asparagine 379. 5 disulfides stabilise this stretch: cysteine 101–cysteine 222, cysteine 108–cysteine 213, cysteine 113–cysteine 170, cysteine 235–cysteine 265, and cysteine 245–cysteine 257. Residues 113–169 form a V1 region; the sequence is CNKSETDRWGLTKSSTTITTAAPTSAPVSEKLDMVNETSSCIAQNNCTGLEQEQMIS. The interval 170-213 is V2; the sequence is CKFNMTGLKRDKTKEYNETWYSTDLVCEQRNSTDNESRCYMNHC. A V3 region spans residues 313–345; the sequence is CRRPGNKTVLPVTIMSELVFHSQPINDRPKQAW. Cysteines 313 and 346 form a disulfide. 2 cysteine pairs are disulfide-bonded: cysteine 397–cysteine 461 and cysteine 404–cysteine 434. A V4 region spans residues 404 to 434; the sequence is CKMNWFLNWVEDKDVTTQRPKERHRKNYVPC. Residues asparagine 462 and asparagine 478 are each glycosylated (N-linked (GlcNAc...) asparagine; by host). Residues 477–484 are V5; the sequence is GNQTSITM. Residues 528 to 548 are fusion peptide; it reads GVFVLGFLGFLATAGSAIGAV. The segment at 591 to 607 is immunosuppression; that stretch reads LQTKVTAIEKYLKDQAQ. 3 N-linked (GlcNAc...) asparagine; by host glycosylation sites follow: asparagine 627, asparagine 636, and asparagine 652. Residues 636–668 adopt a coiled-coil conformation; sequence NDTWQEWERKVDFLEENITALLEEAQIQQEKNM. The interval 673 to 694 is MPER; binding to GalCer; it reads KLNSWDVFGNWFDLASWIKYIQ. A helical membrane pass occupies residues 697–717; the sequence is IYVVVGVILLRIVIYIVQMLA. Over 718–881 the chain is Cytoplasmic; sequence KLRQGYRPVF…IRQGLELTLL (164 aa). Residues 723 to 726 carry the YXXV motif; contains endocytosis signal motif; sequence YRPV. The segment at 737–761 is disordered; sequence THTQQDPALPTREGKEGDGGEGGGN. The S-palmitoyl cysteine; by host moiety is linked to residue cysteine 789. Positions 880 to 881 match the Di-leucine internalization motif motif; sequence LL.

In terms of assembly, the mature envelope protein (Env) consists of a homotrimer of non-covalently associated gp120-gp41 heterodimers. The resulting complex protrudes from the virus surface as a spike. Interacts with host CD4 and CCR5. Gp120 also interacts with the C-type lectins CD209/DC-SIGN and CLEC4M/DC-SIGNR (collectively referred to as DC-SIGN(R)). As to quaternary structure, the mature envelope protein (Env) consists of a homotrimer of non-covalently associated gp120-gp41 heterodimers. The resulting complex protrudes from the virus surface as a spike. In terms of processing, specific enzymatic cleavages in vivo yield mature proteins. Envelope glycoproteins are synthesized as an inactive precursor that is heavily N-glycosylated and processed likely by host cell furin in the Golgi to yield the mature SU and TM proteins. The cleavage site between SU and TM requires the minimal sequence [KR]-X-[KR]-R. Post-translationally, palmitoylation of the transmembrane protein and of Env polyprotein (prior to its proteolytic cleavage) is essential for their association with host cell membrane lipid rafts. Palmitoylation is therefore required for envelope trafficking to classical lipid rafts, but not for viral replication.

The protein resides in the virion membrane. The protein localises to the host cell membrane. It localises to the host endosome membrane. Its function is as follows. The surface protein gp120 (SU) attaches the virus to the host lymphoid cell by binding to the primary receptor CD4. This interaction induces a structural rearrangement creating a high affinity binding site for a chemokine coreceptor like CCR5. This peculiar 2 stage receptor-interaction strategy allows gp120 to maintain the highly conserved coreceptor-binding site in a cryptic conformation, protected from neutralizing antibodies. These changes are transmitted to the transmembrane protein gp41 and are thought to activate its fusogenic potential by unmasking its fusion peptide. Functionally, surface protein gp120 (SU) may target the virus to gut-associated lymphoid tissue (GALT) by binding host ITGA4/ITGB7 (alpha-4/beta-7 integrins), a complex that mediates T-cell migration to the GALT. Interaction between gp120 and ITGA4/ITGB7 would allow the virus to enter GALT early in the infection, infecting and killing most of GALT's resting CD4+ T-cells. This T-cell depletion is believed to be the major insult to the host immune system leading to AIDS. The surface protein gp120 is a ligand for CD209/DC-SIGN and CLEC4M/DC-SIGNR, which are respectively found on dendritic cells (DCs), and on endothelial cells of liver sinusoids and lymph node sinuses. These interactions allow capture of viral particles at mucosal surfaces by these cells and subsequent transmission to permissive cells. DCs are professional antigen presenting cells, critical for host immunity by inducing specific immune responses against a broad variety of pathogens. They act as sentinels in various tissues where they take up antigen, process it, and present it to T-cells following migration to lymphoid organs. SIV subverts the migration properties of dendritic cells to gain access to CD4+ T-cells in lymph nodes. Virus transmission to permissive T-cells occurs either in trans (without DCs infection, through viral capture and transmission), or in cis (following DCs productive infection, through the usual CD4-gp120 interaction), thereby inducing a robust infection. In trans infection, bound virions remain infectious over days and it is proposed that they are not degraded, but protected in non-lysosomal acidic organelles within the DCs close to the cell membrane thus contributing to the viral infectious potential during DCs' migration from the periphery to the lymphoid tissues. On arrival at lymphoid tissues, intact virions recycle back to DCs' cell surface allowing virus transmission to CD4+ T-cells. Virion capture also seems to lead to MHC-II-restricted viral antigen presentation, and probably to the activation of SIV-specific CD4+ cells. In terms of biological role, the transmembrane protein gp41 (TM) acts as a class I viral fusion protein. Under the current model, the protein has at least 3 conformational states: pre-fusion native state, pre-hairpin intermediate state, and post-fusion hairpin state. During fusion of viral and target intracellular membranes, the coiled coil regions (heptad repeats) assume a trimer-of-hairpins structure, positioning the fusion peptide in close proximity to the C-terminal region of the ectodomain. The formation of this structure appears to drive apposition and subsequent fusion of viral and target cell membranes. Complete fusion occurs in host cell endosomes. The virus undergoes clathrin-dependent internalization long before endosomal fusion, thus minimizing the surface exposure of conserved viral epitopes during fusion and reducing the efficacy of inhibitors targeting these epitopes. Membranes fusion leads to delivery of the nucleocapsid into the cytoplasm. Its function is as follows. The envelope glycoprotein gp160 precursor down-modulates cell surface CD4 antigen by interacting with it in the endoplasmic reticulum and blocking its transport to the cell surface. Functionally, the gp120-gp41 heterodimer allows rapid transcytosis of the virus through CD4 negative cells such as simple epithelial monolayers of the intestinal, rectal and endocervical epithelial barriers. Both gp120 and gp41 specifically recognize glycosphingolipids galactosyl-ceramide (GalCer) or 3' sulfo-galactosyl-ceramide (GalS) present in the lipid rafts structures of epithelial cells. Binding to these alternative receptors allows the rapid transcytosis of the virus through the epithelial cells. This transcytotic vesicle-mediated transport of virions from the apical side to the basolateral side of the epithelial cells does not involve infection of the cells themselves. The sequence is that of Envelope glycoprotein gp160 (env) from Simian immunodeficiency virus (isolate K78) (SIV-mac).